The primary structure comprises 275 residues: Large ribosomal subunit protein uL2 (275 aa).

2 disordered regions span residues 24–54 (LYKG…VRHQ) and 223–275 (VAMN…RHKR). 2 stretches are compositionally biased toward basic and acidic residues: residues 25 to 38 (YKGR…EKKT) and 229 to 241 (DHPH…RTGE).

Belongs to the universal ribosomal protein uL2 family. In terms of assembly, part of the 50S ribosomal subunit. Forms a bridge to the 30S subunit in the 70S ribosome.

One of the primary rRNA binding proteins. Required for association of the 30S and 50S subunits to form the 70S ribosome, for tRNA binding and peptide bond formation. It has been suggested to have peptidyltransferase activity; this is somewhat controversial. Makes several contacts with the 16S rRNA in the 70S ribosome. In Azoarcus sp. (strain BH72), this protein is Large ribosomal subunit protein uL2.